The chain runs to 412 residues: Probable serine/threonine-protein kinase PBL4 (412 aa).

Glycine 2 carries N-myristoyl glycine lipidation. Residue cysteine 4 is the site of S-palmitoyl cysteine attachment. The tract at residues 14–40 is disordered; the sequence is RESPYRGSSRISAKRSQSSRLSSLTIQ. Over residues 21–40 the composition is skewed to low complexity; it reads SSRISAKRSQSSRLSSLTIQ. The residue at position 72 (threonine 72) is a Phosphothreonine. The Protein kinase domain occupies 83 to 369; it reads FRPDSVIGEG…STLEELEMTL (287 aa). ATP-binding positions include 89–97 and lysine 121; that span reads IGEGGFGYV. At tyrosine 167 the chain carries Phosphotyrosine. Aspartate 215 functions as the Proton acceptor in the catalytic mechanism. Phosphoserine occurs at positions 219 and 249. Phosphothreonine occurs at positions 250 and 255. Residue tyrosine 263 is modified to Phosphotyrosine.

Belongs to the protein kinase superfamily. Ser/Thr protein kinase family.

The protein localises to the cell membrane. The enzyme catalyses L-seryl-[protein] + ATP = O-phospho-L-seryl-[protein] + ADP + H(+). It catalyses the reaction L-threonyl-[protein] + ATP = O-phospho-L-threonyl-[protein] + ADP + H(+). Functionally, may be involved in plant defense signaling. The chain is Probable serine/threonine-protein kinase PBL4 from Arabidopsis thaliana (Mouse-ear cress).